The following is a 54-amino-acid chain: U7-myrmicitoxin-Tb1a (54 aa).

A signal peptide spans 1-26; it reads MQLSHLLLAFAMIFVMTIIHTPQVQA. Residues 27-36 constitute a propeptide that is removed on maturation; it reads DAMADADADA. A disulfide bridge connects residues Cys-40 and Cys-49.

Expressed by the venom gland.

Its subcellular location is the secreted. Venom protein with unknown function. Does not induce paralysis when a high dose is administered by intrathoracic injection into the blowfly Lucilia caesar. In Tetramorium bicarinatum (Tramp ant), this protein is U7-myrmicitoxin-Tb1a.